Consider the following 90-residue polypeptide: Small ribosomal subunit protein uS15 (90 aa).

Belongs to the universal ribosomal protein uS15 family. Part of the 30S ribosomal subunit. Forms a bridge to the 50S subunit in the 70S ribosome, contacting the 23S rRNA.

In terms of biological role, one of the primary rRNA binding proteins, it binds directly to 16S rRNA where it helps nucleate assembly of the platform of the 30S subunit by binding and bridging several RNA helices of the 16S rRNA. Functionally, forms an intersubunit bridge (bridge B4) with the 23S rRNA of the 50S subunit in the ribosome. The polypeptide is Small ribosomal subunit protein uS15 (Aliarcobacter butzleri (strain RM4018) (Arcobacter butzleri)).